The chain runs to 137 residues: Methylglyoxal synthase (137 aa).

The MGS-like domain occupies 1–137 (MKIALIAHDR…NIVHGRDRDA (137 aa)). Substrate-binding positions include His-8, Lys-12, 34–37 (TGTT), and 54–55 (SG). The Proton donor/acceptor role is filled by Asp-60. Substrate is bound at residue His-87.

Belongs to the methylglyoxal synthase family.

The catalysed reaction is dihydroxyacetone phosphate = methylglyoxal + phosphate. Functionally, catalyzes the formation of methylglyoxal from dihydroxyacetone phosphate. The protein is Methylglyoxal synthase of Bacillus licheniformis (strain ATCC 14580 / DSM 13 / JCM 2505 / CCUG 7422 / NBRC 12200 / NCIMB 9375 / NCTC 10341 / NRRL NRS-1264 / Gibson 46).